The sequence spans 297 residues: Urease accessory protein UreD (297 aa).

Residues 1–41 (MPQAADIATAPQRPSAPGDVVAAGQPPRARGRAHVSSKRRD) form a disordered region.

The protein belongs to the UreD family. In terms of assembly, ureD, UreF and UreG form a complex that acts as a GTP-hydrolysis-dependent molecular chaperone, activating the urease apoprotein by helping to assemble the nickel containing metallocenter of UreC. The UreE protein probably delivers the nickel.

Its subcellular location is the cytoplasm. Its function is as follows. Required for maturation of urease via the functional incorporation of the urease nickel metallocenter. The polypeptide is Urease accessory protein UreD (Ruegeria sp. (strain TM1040) (Silicibacter sp.)).